We begin with the raw amino-acid sequence, 194 residues long: Leucyl/phenylalanyl-tRNA--protein transferase (194 aa).

Belongs to the L/F-transferase family.

The protein localises to the cytoplasm. The enzyme catalyses N-terminal L-lysyl-[protein] + L-leucyl-tRNA(Leu) = N-terminal L-leucyl-L-lysyl-[protein] + tRNA(Leu) + H(+). The catalysed reaction is N-terminal L-arginyl-[protein] + L-leucyl-tRNA(Leu) = N-terminal L-leucyl-L-arginyl-[protein] + tRNA(Leu) + H(+). It catalyses the reaction L-phenylalanyl-tRNA(Phe) + an N-terminal L-alpha-aminoacyl-[protein] = an N-terminal L-phenylalanyl-L-alpha-aminoacyl-[protein] + tRNA(Phe). In terms of biological role, functions in the N-end rule pathway of protein degradation where it conjugates Leu, Phe and, less efficiently, Met from aminoacyl-tRNAs to the N-termini of proteins containing an N-terminal arginine or lysine. This chain is Leucyl/phenylalanyl-tRNA--protein transferase, found in Chlorobium limicola (strain DSM 245 / NBRC 103803 / 6330).